The primary structure comprises 245 residues: Major prion protein (245 aa).

A signal peptide spans 1–22 (MANLGCWMLVVFVATWSDLGLC). The interval 23–222 (KKRPKPGGWN…ESQAYYQRGS (200 aa)) is interaction with GRB2, ERI3 and SYN1. The interval 25–102 (RPKPGGWNTG…KPSKPKTSMK (78 aa)) is disordered. A run of 4 repeats spans residues 51-59 (PQGGGGWGQ), 60-67 (PHGGGWGQ), 68-75 (PHGGGWGQ), and 76-83 (PHGGGWGQ). Residues 51-83 (PQGGGGWGQPHGGGWGQPHGGGWGQPHGGGWGQ) are 4 X 8 AA tandem repeats of P-H-G-G-G-W-G-Q. Positions 52–87 (QGGGGWGQPHGGGWGQPHGGGWGQPHGGGWGQGGGT) are enriched in gly residues. Residues G54, G55, H61, G62, G63, H69, G70, G71, H77, G78, and G79 each contribute to the Cu(2+) site. The segment covering 90–101 (QWHKPSKPKTSM) has biased composition (basic residues). Residues C171 and C206 are joined by a disulfide bond. Residues N173 and N189 are each glycosylated (N-linked (GlcNAc...) asparagine). The GPI-anchor amidated serine moiety is linked to residue S222. A propeptide spans 223 to 245 (SMVLFSSPPVILLISFLIFLIVG) (removed in mature form).

The protein belongs to the prion family. In terms of assembly, monomer and homodimer. Has a tendency to aggregate into amyloid fibrils containing a cross-beta spine, formed by a steric zipper of superposed beta-strands. Soluble oligomers may represent an intermediate stage on the path to fibril formation. Copper binding may promote oligomerization. Interacts with GRB2, APP, ERI3/PRNPIP and SYN1. Mislocalized cytosolically exposed PrP interacts with MGRN1; this interaction alters MGRN1 subcellular location and causes lysosomal enlargement. Interacts with KIAA1191.

Its subcellular location is the cell membrane. The protein localises to the golgi apparatus. Its primary physiological function is unclear. Has cytoprotective activity against internal or environmental stresses. May play a role in neuronal development and synaptic plasticity. May be required for neuronal myelin sheath maintenance. May play a role in iron uptake and iron homeostasis. Soluble oligomers are toxic to cultured neuroblastoma cells and induce apoptosis (in vitro). Association with GPC1 (via its heparan sulfate chains) targets PRNP to lipid rafts. Also provides Cu(2+) or Zn(2+) for the ascorbate-mediated GPC1 deaminase degradation of its heparan sulfate side chains. In Cercopithecus diana (Diana monkey), this protein is Major prion protein (PRNP).